A 620-amino-acid chain; its full sequence is Protein regulator of cytokinesis 1 (620 aa).

Residues 1–303 form a required for the interaction with KIF4A region; the sequence is MRRSEVLAEE…IEAIRVELVQ (303 aa). Positions 1–341 are dimerization; that stretch reads MRRSEVLAEE…QLHDAEIVRL (341 aa). Coiled-coil stretches lie at residues 96 to 133, 211 to 304, and 383 to 463; these read ILQLEKDLRTQVELMRKQKKERKQELKLLQEQDQELCE, SLEN…LVQY, and GNLL…TEML. Residues 342–466 are spectrin-fold; the sequence is KNYYEVHKEL…QTETEMLYGS (125 aa). The segment covering 446–459 has biased composition (basic and acidic residues); that stretch reads AKQERQLKNKKQTE. The disordered stretch occupies residues 446–488; it reads AKQERQLKNKKQTETEMLYGSAPRTPSKRRGLAPNTPGKARKL. The tract at residues 467-620 is unstructured, Arg/Lys rich; it reads APRTPSKRRG…GILNSTNIQS (154 aa). A phosphothreonine; by CDK1 mark is found at threonine 470 and threonine 481. Serine 513, arginine 541, and serine 571 each carry phosphoserine. Residues 517 to 545 form a disordered region; sequence RLPPSGSKPVAASTCSGKKTPRTGRHGAN. Phosphothreonine is present on threonine 578. A disordered region spans residues 600–620; it reads LSKASKSDATSGILNSTNIQS. Polar residues predominate over residues 606–620; that stretch reads SDATSGILNSTNIQS. Position 616 is a phosphothreonine; by PLK1 (threonine 616).

It belongs to the MAP65/ASE1 family. Homodimer. Interacts with the C-terminal Rho-GAP domain and the basic region of RACGAP1. The interaction with RACGAP1 inhibits its GAP activity towards CDC42 in vitro, which may be required for maintaining normal spindle morphology. Interacts (via N-terminus) with the C-terminus of CENPE (via C-terminus); the interaction occurs during late mitosis. Interacts (via N-terminus) with KIF4A (via C-terminus); the interaction is required for the progression of mitosis. Interacts (via N-terminus) with KIF23 (via C-terminus); the interaction occurs during late mitosis. Interacts with KIF14 and KIF20A. Interacts with PLK1. Interacts with KIF20B. Interacts with CCDC66. Phosphorylation by CDK1 in early mitosis holds PRC1 in an inactive monomeric state, during the metaphase to anaphase transition, PRC1 is dephosphorylated, promoting interaction with KIF4A, which then translocates PRC1 along mitotic spindles to the plus ends of antiparallel interdigitating microtubules. Dephosphorylation also promotes MT-bundling activity by allowing dimerization. Phosphorylation by CDK1 prevents PLK1-binding: upon degradation of CDK1 at anaphase and dephosphorylation, it is then phosphorylated by PLK1, leading to cytokinesis. In terms of tissue distribution, overexpressed in bladder cancer cells.

The protein localises to the nucleus. It localises to the cytoplasm. Its subcellular location is the cytoskeleton. The protein resides in the spindle pole. It is found in the midbody. The protein localises to the chromosome. Key regulator of cytokinesis that cross-links antiparrallel microtubules at an average distance of 35 nM. Essential for controlling the spatiotemporal formation of the midzone and successful cytokinesis. Required for KIF14 localization to the central spindle and midbody. Required to recruit PLK1 to the spindle. Stimulates PLK1 phosphorylation of RACGAP1 to allow recruitment of ECT2 to the central spindle. Acts as an oncogene for promoting bladder cancer cells proliferation, apoptosis inhibition and carcinogenic progression. The chain is Protein regulator of cytokinesis 1 from Homo sapiens (Human).